The sequence spans 646 residues: mRNA 3'-end-processing protein RNA14 (646 aa).

6 HAT repeats span residues 46–78, 80–114, 128–160, 171–204, 249–281, and 290–322; these read DDYD…SELQ, NEFD…YVRR, VVIK…FLHQ, QRLD…WEQE, ANKN…WEKE, and ALKD…YEFD. A disordered region spans residues 571–599; the sequence is DGDPSGVDKSFKKRQIENDENLPDSKRQK.

The protein localises to the nucleus. It is found in the cytoplasm. In terms of biological role, component of the cleavage factor IA (CFIA) complex, which is involved in the endonucleolytic cleavage during polyadenylation-dependent pre-mRNA 3'-end formation. The protein is mRNA 3'-end-processing protein RNA14 (RNA14) of Candida glabrata (strain ATCC 2001 / BCRC 20586 / JCM 3761 / NBRC 0622 / NRRL Y-65 / CBS 138) (Yeast).